A 358-amino-acid chain; its full sequence is Protein-glutamate methylesterase/protein-glutamine glutaminase 3 (358 aa).

A Response regulatory domain is found at 2–118; that stretch reads KILVVDDSAL…CGRLQEVAPL (117 aa). Aspartate 52 carries the post-translational modification 4-aspartylphosphate. The CheB-type methylesterase domain maps to 155–325; it reads NNEDHQLAIM…VPSMPEALLK (171 aa). Residues serine 167, histidine 194, and aspartate 291 contribute to the active site.

The protein belongs to the CheB family. Phosphorylated by CheA. Phosphorylation of the N-terminal regulatory domain activates the methylesterase activity.

The protein localises to the cytoplasm. It carries out the reaction [protein]-L-glutamate 5-O-methyl ester + H2O = L-glutamyl-[protein] + methanol + H(+). The enzyme catalyses L-glutaminyl-[protein] + H2O = L-glutamyl-[protein] + NH4(+). In terms of biological role, involved in chemotaxis. Part of a chemotaxis signal transduction system that modulates chemotaxis in response to various stimuli. Catalyzes the demethylation of specific methylglutamate residues introduced into the chemoreceptors (methyl-accepting chemotaxis proteins or MCP) by CheR. Also mediates the irreversible deamidation of specific glutamine residues to glutamic acid. The sequence is that of Protein-glutamate methylesterase/protein-glutamine glutaminase 3 from Vibrio cholerae serotype O1 (strain ATCC 39315 / El Tor Inaba N16961).